A 468-amino-acid polypeptide reads, in one-letter code: N-acetyltransferase SLI1 (468 aa).

It is found in the endoplasmic reticulum. Its function is as follows. Confers resistance to the sphingolipid biosynthesis inhibitor drug myriocin (ISP-1). Inactivates ISP-1 by converting it into N-acetyl-myriocin. Cooperates with YPK1 in mediating resistance to myriocin. This chain is N-acetyltransferase SLI1 (SLI1), found in Saccharomyces cerevisiae (strain ATCC 204508 / S288c) (Baker's yeast).